A 302-amino-acid chain; its full sequence is tRNA pseudouridine synthase B (302 aa).

The Nucleophile role is filled by aspartate 45.

Belongs to the pseudouridine synthase TruB family. Type 1 subfamily.

It carries out the reaction uridine(55) in tRNA = pseudouridine(55) in tRNA. In terms of biological role, responsible for synthesis of pseudouridine from uracil-55 in the psi GC loop of transfer RNAs. The chain is tRNA pseudouridine synthase B from Francisella tularensis subsp. holarctica (strain FTNF002-00 / FTA).